Here is a 358-residue protein sequence, read N- to C-terminus: Oligopeptide transport ATP-binding protein OppD (358 aa).

One can recognise an ABC transporter domain in the interval 8–259; the sequence is LEVKDLAISF…PRHPYTWGLL (252 aa). Residue 44 to 51 participates in ATP binding; that stretch reads GESGSGKS.

It belongs to the ABC transporter superfamily. The complex is composed of two ATP-binding proteins (OppD and OppF), two transmembrane proteins (OppB and OppC) and a solute-binding protein (OppA).

The protein resides in the cell membrane. The catalysed reaction is a [peptide](out) + ATP + H2O = a [peptide](in) + ADP + phosphate + H(+). Functionally, part of the ABC transporter complex OppABCDF involved in the uptake of oligopeptides. Probably responsible for energy coupling to the transport system. Required for sporulation and genetic competence. The polypeptide is Oligopeptide transport ATP-binding protein OppD (Bacillus subtilis (strain 168)).